Here is a 176-residue protein sequence, read N- to C-terminus: 3-hydroxyanthranilate 3,4-dioxygenase (176 aa).

Arg44 provides a ligand contact to O2. His48, Glu54, and His92 together coordinate Fe cation. Residue Glu54 coordinates substrate. Arg96 and Glu106 together coordinate substrate. Positions 121, 124, 158, and 161 each coordinate Fe cation.

The protein belongs to the 3-HAO family. Homodimer. The cofactor is Fe(2+).

It catalyses the reaction 3-hydroxyanthranilate + O2 = (2Z,4Z)-2-amino-3-carboxymuconate 6-semialdehyde. Its pathway is cofactor biosynthesis; NAD(+) biosynthesis; quinolinate from L-kynurenine: step 3/3. In terms of biological role, catalyzes the oxidative ring opening of 3-hydroxyanthranilate to 2-amino-3-carboxymuconate semialdehyde, which spontaneously cyclizes to quinolinate. The sequence is that of 3-hydroxyanthranilate 3,4-dioxygenase from Xanthomonas oryzae pv. oryzae (strain MAFF 311018).